A 359-amino-acid chain; its full sequence is Ribosomal RNA small subunit methyltransferase H (359 aa).

Residues 39-41 (AGH), aspartate 58, phenylalanine 87, aspartate 108, and glutamine 115 each bind S-adenosyl-L-methionine. A disordered region spans residues 339–359 (IQGSASPGRAKNTARIRTRRG). The segment covering 350-359 (NTARIRTRRG) has biased composition (basic residues).

Belongs to the methyltransferase superfamily. RsmH family.

It is found in the cytoplasm. It carries out the reaction cytidine(1402) in 16S rRNA + S-adenosyl-L-methionine = N(4)-methylcytidine(1402) in 16S rRNA + S-adenosyl-L-homocysteine + H(+). In terms of biological role, specifically methylates the N4 position of cytidine in position 1402 (C1402) of 16S rRNA. The polypeptide is Ribosomal RNA small subunit methyltransferase H (Bifidobacterium longum subsp. infantis (strain ATCC 15697 / DSM 20088 / JCM 1222 / NCTC 11817 / S12)).